We begin with the raw amino-acid sequence, 201 residues long: Peptidyl-tRNA hydrolase (201 aa).

Tyrosine 15 serves as a coordination point for tRNA. Catalysis depends on histidine 20, which acts as the Proton acceptor. Positions 66, 68, and 114 each coordinate tRNA.

It belongs to the PTH family. As to quaternary structure, monomer.

Its subcellular location is the cytoplasm. The enzyme catalyses an N-acyl-L-alpha-aminoacyl-tRNA + H2O = an N-acyl-L-amino acid + a tRNA + H(+). Functionally, hydrolyzes ribosome-free peptidyl-tRNAs (with 1 or more amino acids incorporated), which drop off the ribosome during protein synthesis, or as a result of ribosome stalling. Catalyzes the release of premature peptidyl moieties from peptidyl-tRNA molecules trapped in stalled 50S ribosomal subunits, and thus maintains levels of free tRNAs and 50S ribosomes. The chain is Peptidyl-tRNA hydrolase from Burkholderia thailandensis (strain ATCC 700388 / DSM 13276 / CCUG 48851 / CIP 106301 / E264).